The sequence spans 488 residues: MTKNNEVGWNLDNSYATLPQSFYTEIPPTPVSSPELVKLNHSLAISLGFNPEELKKEAEIAIFAGNALPEGAHPLAQAYAGHQFGHFNMLGDGRALLIGEQITPSGKRFDIQLKGSGPTPYSRRGDGRAALGPMLREYIISEAMYALDIPTTRSLAVVTTGEPTYRETKLPGAILTRVASSHIRVGTFQYAAARGSIEDLQSLADYTIKRHYPEIEAHENRYTALLQEVIKKQASLIAKWQLVGFIHGVMNTDNITISGETIDYGPCAFMDNYDQGTVFSSIDTQGRYAYGNQPYMAAWDLARLAESLIPILHEDEEEALKIAQDEISKFSVQYEKQWFIGMKKKLGLFSNEEQDQSLIEQLFKMMEKYKADYTNTFRSLTLDTLENTPLFDSPEFKEWYKLWQSRLEKQEESKENAYEMMKNNNPSIIPRNHRVEEALEAAVTNGDYSVMEKLLEALANPYAYSTDQEEYCVPPAPTNRPYRTFCGT.

Residues glycine 91, glycine 93, arginine 94, lysine 114, aspartate 126, glycine 127, arginine 177, and arginine 184 each contribute to the ATP site. Aspartate 253 serves as the catalytic Proton acceptor. Residues asparagine 254 and aspartate 263 each coordinate Mg(2+). Aspartate 263 serves as a coordination point for ATP.

It belongs to the SELO family. Requires Mg(2+) as cofactor. The cofactor is Mn(2+).

It catalyses the reaction L-seryl-[protein] + ATP = 3-O-(5'-adenylyl)-L-seryl-[protein] + diphosphate. The enzyme catalyses L-threonyl-[protein] + ATP = 3-O-(5'-adenylyl)-L-threonyl-[protein] + diphosphate. The catalysed reaction is L-tyrosyl-[protein] + ATP = O-(5'-adenylyl)-L-tyrosyl-[protein] + diphosphate. It carries out the reaction L-histidyl-[protein] + UTP = N(tele)-(5'-uridylyl)-L-histidyl-[protein] + diphosphate. It catalyses the reaction L-seryl-[protein] + UTP = O-(5'-uridylyl)-L-seryl-[protein] + diphosphate. The enzyme catalyses L-tyrosyl-[protein] + UTP = O-(5'-uridylyl)-L-tyrosyl-[protein] + diphosphate. Its function is as follows. Nucleotidyltransferase involved in the post-translational modification of proteins. It can catalyze the addition of adenosine monophosphate (AMP) or uridine monophosphate (UMP) to a protein, resulting in modifications known as AMPylation and UMPylation. In Bacillus thuringiensis (strain Al Hakam), this protein is Protein nucleotidyltransferase YdiU.